The chain runs to 140 residues: Sex-regulated protein janus-B (140 aa).

Substrate is bound at residue R42. H69 acts as the Proton acceptor in catalysis. Substrate is bound at residue 110 to 112; that stretch reads SRT.

This sequence belongs to the janus family.

JanA and janB regulate somatic sex differentiation. This Drosophila erecta (Fruit fly) protein is Sex-regulated protein janus-B (janB).